A 192-amino-acid chain; its full sequence is I-Kappa-B like protein H1 (192 aa).

ANK repeat units follow at residues 94–126 (KGAQCTHIIATSNVSCSIDMMNIVLQLGADING), 131–161 (AGLTPLHICVNKKNYALAEWLCQAPGIDVKV), and 165–192 (GKETPYDLACKMEDRKMMKIFEERSKKM).

Belongs to the polydnaviridae I-Kappa-B-like protein family.

In terms of biological role, suppresses the host immune response through NF-kappa-B inactivation. Possesses ankyrin repeat domains required for NF-kappa-B binding but lacks the regulatory regions required for dissociation from NF-kappa-B and degradation. Therefore, prevents host NF-kappa-B release and subsequent activation. The polypeptide is I-Kappa-B like protein H1 (H4) (Microplitis demolitor bracovirus (isolate Webb) (MdBV)).